Consider the following 365-residue polypeptide: Peptide chain release factor 2 (365 aa).

Glutamine 252 is modified (N5-methylglutamine).

It belongs to the prokaryotic/mitochondrial release factor family. Post-translationally, methylated by PrmC. Methylation increases the termination efficiency of RF2.

The protein resides in the cytoplasm. Functionally, peptide chain release factor 2 directs the termination of translation in response to the peptide chain termination codons UGA and UAA. The polypeptide is Peptide chain release factor 2 (Pectobacterium atrosepticum (strain SCRI 1043 / ATCC BAA-672) (Erwinia carotovora subsp. atroseptica)).